Reading from the N-terminus, the 130-residue chain is Small ribosomal subunit protein uS11 (130 aa).

This sequence belongs to the universal ribosomal protein uS11 family. Part of the 30S ribosomal subunit. Interacts with proteins S7 and S18. Binds to IF-3.

Its function is as follows. Located on the platform of the 30S subunit, it bridges several disparate RNA helices of the 16S rRNA. Forms part of the Shine-Dalgarno cleft in the 70S ribosome. In Prochlorococcus marinus (strain NATL2A), this protein is Small ribosomal subunit protein uS11.